The primary structure comprises 541 residues: Beta-hexosaminidase 1 (541 aa).

Residues 1-20 (MSTNLLRLILLFITLSITSS) form the signal peptide. Residues asparagine 44 and asparagine 304 are each glycosylated (N-linked (GlcNAc...) asparagine). Residues cysteine 295 and cysteine 337 are joined by a disulfide bond. Residue glutamate 332 is the Proton donor of the active site. N-linked (GlcNAc...) asparagine glycans are attached at residues asparagine 340, asparagine 352, and asparagine 497. The cysteines at positions 511 and 538 are disulfide-linked.

The protein belongs to the glycosyl hydrolase 20 family. Post-translationally, N-glycosylated. As to expression, expressed in roots, leaves, stems, flowers and siliques.

It is found in the vacuole. The enzyme catalyses Hydrolysis of terminal non-reducing N-acetyl-D-hexosamine residues in N-acetyl-beta-D-hexosaminides.. With respect to regulation, inhibited by N-acetylcastanospermine, 2-acet-amido-1,2-dideoxynojirimycin and PUGNAc. Functionally, has a broad substrate specificity. Can use synthetic substrates such as pyridylaminated chitotriose, pyridylaminated chitobiose, p-nitrophenyl-beta-N-acetylglucosaminide, p-nitrophenyl-2-acetamido-2-deoxy-beta-D-glucopyranoside (pNP-GlcNAc), p-nitrophenyl-2-acetamido-2-deoxy-beta-D-galactopyranoside (pNP-GalNAc), 4-methylumbelliferyl-2-acetamido-2-deoxy-beta-D-glucopyranoside (MU-GlcNAc), and 4-methylumbelliferyl-6-sulfo-2-acetamido-2-deoxy-beta-D-glucopyranoside (MU-GlcNAc-6SO(4)) as substrates. Removes terminal GlcNAc residues from alpha1,3- and alpha1,6-mannosyl branches of biantennary N-glycans without any strict branch preference. Required for the presence of paucimannosidic N-glycans in glycoproteins of roots and, to a lower extent, of leaves. This chain is Beta-hexosaminidase 1 (HEXO1), found in Arabidopsis thaliana (Mouse-ear cress).